A 164-amino-acid polypeptide reads, in one-letter code: ATP synthase subunit b (164 aa).

A helical transmembrane segment spans residues 6–26 (GELVGNFILVTGSVIVLLLLI).

The protein belongs to the ATPase B chain family. In terms of assembly, F-type ATPases have 2 components, F(1) - the catalytic core - and F(0) - the membrane proton channel. F(1) has five subunits: alpha(3), beta(3), gamma(1), delta(1), epsilon(1). F(0) has three main subunits: a(1), b(2) and c(10-14). The alpha and beta chains form an alternating ring which encloses part of the gamma chain. F(1) is attached to F(0) by a central stalk formed by the gamma and epsilon chains, while a peripheral stalk is formed by the delta and b chains.

The protein resides in the cell membrane. F(1)F(0) ATP synthase produces ATP from ADP in the presence of a proton or sodium gradient. F-type ATPases consist of two structural domains, F(1) containing the extramembraneous catalytic core and F(0) containing the membrane proton channel, linked together by a central stalk and a peripheral stalk. During catalysis, ATP synthesis in the catalytic domain of F(1) is coupled via a rotary mechanism of the central stalk subunits to proton translocation. Functionally, component of the F(0) channel, it forms part of the peripheral stalk, linking F(1) to F(0). In Streptococcus pyogenes serotype M12 (strain MGAS2096), this protein is ATP synthase subunit b.